A 431-amino-acid chain; its full sequence is tRNA (adenine(37)-N6)-methyltransferase (431 aa).

The region spanning T30–N168 is the TsaA-like domain. S-adenosyl-L-methionine is bound by residues P47–Q49, H90–K91, R117, L127, and I148–T151. Disordered stretches follow at residues Q167–N189 and K201–R243. Residues S207–R243 show a composition bias toward basic and acidic residues.

The protein belongs to the tRNA methyltransferase O family.

The catalysed reaction is N(6)-L-threonylcarbamoyladenosine(37) in tRNA + S-adenosyl-L-methionine = N(6)-methyl,N(6)-L-threonylcarbamoyladenosine(37) in tRNA + S-adenosyl-L-homocysteine + H(+). Functionally, S-adenosyl-L-methionine-dependent methyltransferase responsible for the addition of the methyl group in the formation of N6-methyl-N6-threonylcarbamoyladenosine at position 37 (m(6)t(6)A37) of the tRNA anticodon loop of tRNA(Ser)(GCU). The methyl group of m(6)t(6)A37 may improve the efficiency of the tRNA decoding ability. May bind to tRNA. The sequence is that of tRNA (adenine(37)-N6)-methyltransferase from Rattus norvegicus (Rat).